The sequence spans 210 residues: Cell wall protein SRL1 (210 aa).

An N-terminal signal peptide occupies residues 1–19; that stretch reads MLQSVVFFALLTFASSVSA. A glycan (N-linked (GlcNAc...) asparagine) is linked at Asn-23. Disordered regions lie at residues 80-99 and 118-142; these read SLSTSSASGSVTPESTHEIT and LSPSSTAASVSDEDSNNKDAKVKSF. Over residues 118-127 the composition is skewed to low complexity; sequence LSPSSTAASV. Residues 132-141 are compositionally biased toward basic and acidic residues; the sequence is SNNKDAKVKS. Residues Asn-174, Asn-200, and Asn-206 are each glycosylated (N-linked (GlcNAc...) asparagine).

It is found in the secreted. Its subcellular location is the cell wall. The protein localises to the cell surface. Its function is as follows. Required to stabilize the cell wall in the absence of multiple GPI-anchored mannoproteins. The sequence is that of Cell wall protein SRL1 (SRL1) from Saccharomyces cerevisiae (strain ATCC 204508 / S288c) (Baker's yeast).